An 850-amino-acid chain; its full sequence is Tripartite terminase subunit 1 (850 aa).

The C3H1-type zinc-finger motif lies at 191–219; that stretch reads CAQCYEELTIIPNQGRSLNKRLQGLLCNH. Residues 438-489 are disordered; that stretch reads GTTLMTASNSSNSSTHSQRNNGGGGRARGGGKKVVGGGVNGQDGDGSENGLR. Positions 439-457 are enriched in low complexity; the sequence is TTLMTASNSSNSSTHSQRN. Gly residues predominate over residues 458-481; sequence NGGGGRARGGGKKVVGGGVNGQDG. 709 to 716 is an ATP binding site; the sequence is YNETFGKQ. The tract at residues 801 to 831 is disordered; sequence WLPSPYPSSSTAGVSRRVRATRKRPRRASSL. The span at 816–827 shows a compositional bias: basic residues; that stretch reads RRVRATRKRPRR. The Nuclear localization signal signature appears at 822 to 827; sequence RKRPRR.

This sequence belongs to the herpesviridae TRM1 protein family. In terms of assembly, associates with TRM2 and TRM3 to form the tripartite terminase complex. Interacts with portal protein.

It is found in the host nucleus. In terms of biological role, component of the molecular motor that translocates viral genomic DNA in empty capsid during DNA packaging. Forms a tripartite terminase complex together with TRM2 and TRM3 in the host cytoplasm. Once the complex reaches the host nucleus, it interacts with the capsid portal vertex. This portal forms a ring in which genomic DNA is translocated into the capsid. TRM1 carries an endonuclease activity that plays an important role for the cleavage of concatemeric viral DNA into unit length genomes. The chain is Tripartite terminase subunit 1 from Homo sapiens (Human).